The following is an 87-amino-acid chain: Small ribosomal subunit protein bS20 (87 aa).

A disordered region spans residues 1–26 (MANIKSAKKRAVQSEKARKHNASRRS).

It belongs to the bacterial ribosomal protein bS20 family.

Functionally, binds directly to 16S ribosomal RNA. This Salmonella gallinarum (strain 287/91 / NCTC 13346) protein is Small ribosomal subunit protein bS20.